We begin with the raw amino-acid sequence, 323 residues long: ATP synthase gamma chain (323 aa).

The protein belongs to the ATPase gamma chain family. F-type ATPases have 2 components, CF(1) - the catalytic core - and CF(0) - the membrane proton channel. CF(1) has five subunits: alpha(3), beta(3), gamma(1), delta(1), epsilon(1). CF(0) has three main subunits: a, b and c.

The protein localises to the cell inner membrane. Produces ATP from ADP in the presence of a proton gradient across the membrane. The gamma chain is believed to be important in regulating ATPase activity and the flow of protons through the CF(0) complex. The polypeptide is ATP synthase gamma chain (Rickettsia rickettsii (strain Iowa)).